A 464-amino-acid polypeptide reads, in one-letter code: tRNA modification GTPase MnmE (464 aa).

(6S)-5-formyl-5,6,7,8-tetrahydrofolate contacts are provided by R27, E89, and R128. A TrmE-type G domain is found at G225 to F384. N235 is a K(+) binding site. GTP-binding positions include N235–S240, T254–T260, and D279–G282. S239 contributes to the Mg(2+) binding site. 3 residues coordinate K(+): T254, V256, and T259. T260 is a Mg(2+) binding site. K464 contributes to the (6S)-5-formyl-5,6,7,8-tetrahydrofolate binding site.

This sequence belongs to the TRAFAC class TrmE-Era-EngA-EngB-Septin-like GTPase superfamily. TrmE GTPase family. As to quaternary structure, homodimer. Heterotetramer of two MnmE and two MnmG subunits. K(+) is required as a cofactor.

It is found in the cytoplasm. Functionally, exhibits a very high intrinsic GTPase hydrolysis rate. Involved in the addition of a carboxymethylaminomethyl (cmnm) group at the wobble position (U34) of certain tRNAs, forming tRNA-cmnm(5)s(2)U34. This chain is tRNA modification GTPase MnmE, found in Levilactobacillus brevis (strain ATCC 367 / BCRC 12310 / CIP 105137 / JCM 1170 / LMG 11437 / NCIMB 947 / NCTC 947) (Lactobacillus brevis).